Reading from the N-terminus, the 234-residue chain is Lipoprotein-releasing system ATP-binding protein LolD (234 aa).

An ABC transporter domain is found at 13-233; it reads IYLHEIKRQY…SLSDGQVVEL (221 aa). Position 49–56 (49–56) interacts with ATP; sequence APSGSGKS.

This sequence belongs to the ABC transporter superfamily. Lipoprotein translocase (TC 3.A.1.125) family. In terms of assembly, the complex is composed of two ATP-binding proteins (LolD) and two transmembrane proteins (LolC and LolE).

The protein localises to the cell inner membrane. Its function is as follows. Part of the ABC transporter complex LolCDE involved in the translocation of mature outer membrane-directed lipoproteins, from the inner membrane to the periplasmic chaperone, LolA. Responsible for the formation of the LolA-lipoprotein complex in an ATP-dependent manner. In Bradyrhizobium diazoefficiens (strain JCM 10833 / BCRC 13528 / IAM 13628 / NBRC 14792 / USDA 110), this protein is Lipoprotein-releasing system ATP-binding protein LolD.